Consider the following 409-residue polypeptide: Glycosyltransferase GtfC (409 aa).

It belongs to the glycosyltransferase 28 family.

It carries out the reaction dTDP-beta-L-vancosamine + devancoaminyl-vancomycin = epivancomycin + dTDP + H(+). It catalyses the reaction chloroorienticin B + dTDP-beta-L-vancosamine = chloroeremomycin + dTDP + H(+). It participates in antibiotic biosynthesis; vancomycin biosynthesis. Catalyzes the attachment of dTDP-L-4-epi-vancosamine to chloroorienticin B to form chloroeremomycin in the biosynthesis of glycopeptide antibiotic chloroeremomycin, a member of the vancomycin group of antibiotics. Also able to use dTDP-L-4-epi-vancosamine and devancoaminyl-vancomycin (DVV) to create epivancomycin. Acts downstream of GtfA. This is Glycosyltransferase GtfC (gtfC) from Amycolatopsis orientalis (Nocardia orientalis).